The chain runs to 203 residues: Lipoprotein MlpJ (203 aa).

Residues 1–17 (MKIINILFCISLLLLNS) form the signal peptide. The N-palmitoyl cysteine moiety is linked to residue C18. A lipid anchor (S-diacylglycerol cysteine) is attached at C18. The segment at 26 to 47 (LKNNAQQTKSRKKRDLSQEELP) is disordered.

This sequence belongs to the Multicopy lipoprotein (Mlp) family.

The protein localises to the cell outer membrane. In terms of biological role, an outer membrane protein that may participate in pathogenesis. Some human Lyme disease patients have antibodies against this protein. The Mlp proteins probably undergo intragenic recombination, generating new alleles. This Borreliella burgdorferi (strain ATCC 35210 / DSM 4680 / CIP 102532 / B31) (Borrelia burgdorferi) protein is Lipoprotein MlpJ.